The primary structure comprises 226 residues: UPF0758 protein GTNG_2548 (226 aa).

In terms of domain architecture, MPN spans 104–226; that stretch reads VIRCPEDGAK…FISLKEKGYV (123 aa). The Zn(2+) site is built by His-175, His-177, and Asp-188. The JAMM motif signature appears at 175 to 188; it reads HNHPSGDPTPSRED.

This sequence belongs to the UPF0758 family.

The polypeptide is UPF0758 protein GTNG_2548 (Geobacillus thermodenitrificans (strain NG80-2)).